We begin with the raw amino-acid sequence, 121 residues long: MARIAGVDIPNDKRVVISLTYVYGIGLATSKKILAAAGISEDVRVKDLTSDQEDAIRREIDSIKVEGDLRREVNLNIKRLMEIGSYRGIRHRRGLPVRGQNTKNNARTRKGKATAIAGKKK.

The tract at residues 93-121 (RGLPVRGQNTKNNARTRKGKATAIAGKKK) is disordered. The span at 106-121 (ARTRKGKATAIAGKKK) shows a compositional bias: basic residues.

Belongs to the universal ribosomal protein uS13 family. Part of the 30S ribosomal subunit. Forms a loose heterodimer with protein S19. Forms two bridges to the 50S subunit in the 70S ribosome.

Functionally, located at the top of the head of the 30S subunit, it contacts several helices of the 16S rRNA. In the 70S ribosome it contacts the 23S rRNA (bridge B1a) and protein L5 of the 50S subunit (bridge B1b), connecting the 2 subunits; these bridges are implicated in subunit movement. Contacts the tRNAs in the A and P-sites. This is Small ribosomal subunit protein uS13 from Streptococcus uberis (strain ATCC BAA-854 / 0140J).